The primary structure comprises 190 residues: UPF0725 protein At2g20625 (190 aa).

Belongs to the UPF0725 (EMB2204) family.

This is UPF0725 protein At2g20625 from Arabidopsis thaliana (Mouse-ear cress).